We begin with the raw amino-acid sequence, 135 residues long: ATP synthase epsilon chain (135 aa).

The tract at residues 101–122 (TAVTKLEGQPSTPEKVKAQQLF) is disordered.

The protein belongs to the ATPase epsilon chain family. In terms of assembly, F-type ATPases have 2 components, CF(1) - the catalytic core - and CF(0) - the membrane proton channel. CF(1) has five subunits: alpha(3), beta(3), gamma(1), delta(1), epsilon(1). CF(0) has three main subunits: a, b and c.

The protein localises to the cellular thylakoid membrane. Its function is as follows. Produces ATP from ADP in the presence of a proton gradient across the membrane. This chain is ATP synthase epsilon chain, found in Synechococcus sp. (strain CC9311).